A 287-amino-acid polypeptide reads, in one-letter code: Putative sugar uptake protein M6_Spy1874 (287 aa).

The next 10 membrane-spanning stretches (helical) occupy residues 4 to 26 (IFYA…KIGG), 33 to 50 (LGMT…WLIV), 55 to 72 (TLQL…WSIG), 85 to 107 (VSVA…GVLV), 117 to 134 (FVVG…FYFS), 154 to 171 (FRAL…AVLF), 181 to 200 (SVIL…FMSF), 207 to 229 (YVIK…LLAA), 234 to 256 (LAIA…ILFL), and 268 to 285 (VVTG…LGVV).

Belongs to the GRP transporter (TC 2.A.7.5) family.

It is found in the cell membrane. The chain is Putative sugar uptake protein M6_Spy1874 from Streptococcus pyogenes serotype M6 (strain ATCC BAA-946 / MGAS10394).